The chain runs to 465 residues: UDP-N-acetylmuramate--L-alanine ligase (465 aa).

115 to 121 is a binding site for ATP; that stretch reads GAHGKTT.

It belongs to the MurCDEF family.

The protein resides in the cytoplasm. The catalysed reaction is UDP-N-acetyl-alpha-D-muramate + L-alanine + ATP = UDP-N-acetyl-alpha-D-muramoyl-L-alanine + ADP + phosphate + H(+). The protein operates within cell wall biogenesis; peptidoglycan biosynthesis. Functionally, cell wall formation. The sequence is that of UDP-N-acetylmuramate--L-alanine ligase from Coxiella burnetii (strain CbuG_Q212) (Coxiella burnetii (strain Q212)).